A 151-amino-acid polypeptide reads, in one-letter code: Probable cGMP 3',5'-cyclic phosphodiesterase subunit delta (151 aa).

It belongs to the PDE6D/unc-119 family. As to quaternary structure, interacts with Pde6.

The protein localises to the nucleus. The protein resides in the cytoplasm. The polypeptide is Probable cGMP 3',5'-cyclic phosphodiesterase subunit delta (Drosophila virilis (Fruit fly)).